The following is a 909-amino-acid chain: DNA mismatch repair protein MutS (909 aa).

614-621 (GPNMAGKS) lines the ATP pocket. Residues 798–827 (LEENSPQNNDISKESSSSSNSHDKLESSVI) are disordered. Positions 818 to 827 (SHDKLESSVI) are enriched in basic and acidic residues.

This sequence belongs to the DNA mismatch repair MutS family.

In terms of biological role, this protein is involved in the repair of mismatches in DNA. It is possible that it carries out the mismatch recognition step. This protein has a weak ATPase activity. The protein is DNA mismatch repair protein MutS of Clostridium novyi (strain NT).